Consider the following 136-residue polypeptide: NADPH-dependent 7-cyano-7-deazaguanine reductase (136 aa).

The active-site Thioimide intermediate is C53. D60 serves as the catalytic Proton donor. Substrate is bound by residues 75–77 (VEL) and 94–95 (HE).

This sequence belongs to the GTP cyclohydrolase I family. QueF type 1 subfamily.

The protein resides in the cytoplasm. The enzyme catalyses 7-aminomethyl-7-carbaguanine + 2 NADP(+) = 7-cyano-7-deazaguanine + 2 NADPH + 3 H(+). It functions in the pathway tRNA modification; tRNA-queuosine biosynthesis. Catalyzes the NADPH-dependent reduction of 7-cyano-7-deazaguanine (preQ0) to 7-aminomethyl-7-deazaguanine (preQ1). The polypeptide is NADPH-dependent 7-cyano-7-deazaguanine reductase (Nostoc sp. (strain PCC 7120 / SAG 25.82 / UTEX 2576)).